The following is a 358-amino-acid chain: MTTTLRRGETGSLWDRFCDWITSTNNRIYVGWFGVLMIPTLLAATICFVIAFIAAPPVDIDGIREPVSGSLLYGNNIITGAVVPTSNAIGLHFYPIWEALDEWLYNGGPYELIVFHFLIGIFCWLGRQWELSYRLGMRPWICVAYSAPVAAATSVFLIYPIGQGSFSDGMPLGITGTFNFMLVFQAEHNILMHPFHQLGVAGVFGGSLFCAMHGSLVTSSLVRETTETESQNYGYKFGQEQETYSIVAAHGYFGRLIWQYASFNNSRSLHFFLAAWPVVCIWFTALGISTMAFNLNGFNFNQSILDSQGRVVNTWADILNRANLGMEVMHERNAHNFPLDLAAGEVLPIALQSPAING.

The next 3 membrane-spanning stretches (helical) occupy residues 29–46 (YVGW…AATI), 116–131 (HFLI…QWEL), and 140–154 (WICV…AATS). H116 contacts chlorophyll a. W124 contributes to the pheophytin a binding site. [CaMn4O5] cluster-binding residues include D168 and E187. Residues 195-216 (FHQLGVAGVFGGSLFCAMHGSL) form a helical membrane-spanning segment. Chlorophyll a is bound at residue H196. A quinone-binding positions include H213 and 262–263 (SF). A Fe cation-binding site is contributed by H213. Position 270 (H270) interacts with Fe cation. The chain crosses the membrane as a helical span at residues 272–286 (FLAAWPVVCIWFTAL). H330, E331, D340, and A342 together coordinate [CaMn4O5] cluster. Residues 343-358 (AGEVLPIALQSPAING) constitute a propeptide that is removed on maturation.

The protein belongs to the reaction center PufL/M/PsbA/D family. PSII is composed of 1 copy each of membrane proteins PsbA, PsbB, PsbC, PsbD, PsbE, PsbF, PsbH, PsbI, PsbJ, PsbK, PsbL, PsbM, PsbT, PsbX, PsbY, PsbZ, Psb30/Ycf12, peripheral proteins PsbO, CyanoQ (PsbQ), PsbU, PsbV and a large number of cofactors. It forms dimeric complexes. The D1/D2 heterodimer binds P680, chlorophylls that are the primary electron donor of PSII, and subsequent electron acceptors. It shares a non-heme iron and each subunit binds pheophytin, quinone, additional chlorophylls, carotenoids and lipids. D1 provides most of the ligands for the Mn4-Ca-O5 cluster of the oxygen-evolving complex (OEC). There is also a Cl(-1) ion associated with D1 and D2, which is required for oxygen evolution. The PSII complex binds additional chlorophylls, carotenoids and specific lipids. is required as a cofactor. In terms of processing, tyr-159 forms a radical intermediate that is referred to as redox-active TyrZ, YZ or Y-Z. Post-translationally, C-terminally processed by CtpA; processing is essential to allow assembly of the oxygen-evolving complex and thus photosynthetic growth.

It is found in the cellular thylakoid membrane. It carries out the reaction 2 a plastoquinone + 4 hnu + 2 H2O = 2 a plastoquinol + O2. In terms of biological role, photosystem II (PSII) is a light-driven water:plastoquinone oxidoreductase that uses light energy to abstract electrons from H(2)O, generating O(2) and a proton gradient subsequently used for ATP formation. It consists of a core antenna complex that captures photons, and an electron transfer chain that converts photonic excitation into a charge separation. The D1/D2 (PsbA/PsbD) reaction center heterodimer binds P680, the primary electron donor of PSII as well as several subsequent electron acceptors. The sequence is that of Photosystem II protein D1 from Mastigocladus laminosus (Fischerella sp.).